The chain runs to 156 residues: SsrA-binding protein (156 aa).

It belongs to the SmpB family.

The protein resides in the cytoplasm. In terms of biological role, required for rescue of stalled ribosomes mediated by trans-translation. Binds to transfer-messenger RNA (tmRNA), required for stable association of tmRNA with ribosomes. tmRNA and SmpB together mimic tRNA shape, replacing the anticodon stem-loop with SmpB. tmRNA is encoded by the ssrA gene; the 2 termini fold to resemble tRNA(Ala) and it encodes a 'tag peptide', a short internal open reading frame. During trans-translation Ala-aminoacylated tmRNA acts like a tRNA, entering the A-site of stalled ribosomes, displacing the stalled mRNA. The ribosome then switches to translate the ORF on the tmRNA; the nascent peptide is terminated with the 'tag peptide' encoded by the tmRNA and targeted for degradation. The ribosome is freed to recommence translation, which seems to be the essential function of trans-translation. The polypeptide is SsrA-binding protein (Clostridium botulinum (strain Loch Maree / Type A3)).